Consider the following 361-residue polypeptide: UDP-3-O-acylglucosamine N-acyltransferase (361 aa).

The Proton acceptor role is filled by H264.

The protein belongs to the transferase hexapeptide repeat family. LpxD subfamily. As to quaternary structure, homotrimer.

It catalyses the reaction a UDP-3-O-[(3R)-3-hydroxyacyl]-alpha-D-glucosamine + a (3R)-hydroxyacyl-[ACP] = a UDP-2-N,3-O-bis[(3R)-3-hydroxyacyl]-alpha-D-glucosamine + holo-[ACP] + H(+). It functions in the pathway bacterial outer membrane biogenesis; LPS lipid A biosynthesis. In terms of biological role, catalyzes the N-acylation of UDP-3-O-acylglucosamine using 3-hydroxyacyl-ACP as the acyl donor. Is involved in the biosynthesis of lipid A, a phosphorylated glycolipid that anchors the lipopolysaccharide to the outer membrane of the cell. The polypeptide is UDP-3-O-acylglucosamine N-acyltransferase (Bordetella avium (strain 197N)).